Reading from the N-terminus, the 134-residue chain is Small ribosomal subunit protein bS6 (134 aa).

Residues 99–134 are disordered; that stretch reads PSQLAKSADEKRARKAPRSENFDNDQDDESNDDSDE. Basic and acidic residues predominate over residues 105-119; that stretch reads SADEKRARKAPRSEN. Residues 120-134 show a composition bias toward acidic residues; it reads FDNDQDDESNDDSDE.

This sequence belongs to the bacterial ribosomal protein bS6 family.

In terms of biological role, binds together with bS18 to 16S ribosomal RNA. The protein is Small ribosomal subunit protein bS6 of Psychrobacter sp. (strain PRwf-1).